A 373-amino-acid polypeptide reads, in one-letter code: Anhydro-N-acetylmuramic acid kinase (373 aa).

Glycine 12–aspartate 19 contributes to the ATP binding site.

The protein belongs to the anhydro-N-acetylmuramic acid kinase family.

It catalyses the reaction 1,6-anhydro-N-acetyl-beta-muramate + ATP + H2O = N-acetyl-D-muramate 6-phosphate + ADP + H(+). It participates in amino-sugar metabolism; 1,6-anhydro-N-acetylmuramate degradation. It functions in the pathway cell wall biogenesis; peptidoglycan recycling. Catalyzes the specific phosphorylation of 1,6-anhydro-N-acetylmuramic acid (anhMurNAc) with the simultaneous cleavage of the 1,6-anhydro ring, generating MurNAc-6-P. Is required for the utilization of anhMurNAc either imported from the medium or derived from its own cell wall murein, and thus plays a role in cell wall recycling. The protein is Anhydro-N-acetylmuramic acid kinase of Salmonella newport (strain SL254).